The following is a 308-amino-acid chain: Eugenol synthase 1 (308 aa).

NADP(+) is bound by residues 13–16 (TGYI), 35–45 (VRESTVSDPAK), R36, 86–88 (QMQ), 111–113 (SEF), K133, and 153–155 (NCF). The Proton donor/acceptor role is filled by K133.

This sequence belongs to the NmrA-type oxidoreductase family. As to expression, in flowers, mostly expressed in limbs, and, to a lower extent, in tubes.

The enzyme catalyses eugenol + a carboxylate + NADP(+) = a coniferyl ester + NADPH. It catalyses the reaction eugenol + acetate + NADP(+) = (E)-coniferyl acetate + NADPH. It functions in the pathway aromatic compound metabolism; phenylpropanoid biosynthesis. Functionally, involved in the biosynthesis of the floral volatile eugenol. Catalyzes the synthesis of the phenylpropene eugenol from coniferyl acetate. Phenylpropenes are produced by plants as defense compounds with antimicrobial and antianimal properties, or as floral attractants of pollinators. The polypeptide is Eugenol synthase 1 (Petunia hybrida (Petunia)).